Here is a 105-residue protein sequence, read N- to C-terminus: Endogenous retrovirus group K member 6 Rec protein (105 aa).

A disordered region spans residues 1-49 (MNPSEMQRKAPPRRRRHRNRAPLTHKMNKMVTSEEQMKLPSTKKAEPPT). Residues 10-20 (APPRRRRHRNR) show a composition bias toward basic residues. The short motif at 13–20 (RRRRHRNR) is the Nuclear localization signal element. The Nuclear export signal signature appears at 50 to 59 (WAQLKKLTQL).

Forms homodimers, homotrimers, and homotetramers via a C-terminal domain. Associates with XPO1 and with ZNF145. In terms of tissue distribution, expressed at higher level in placenta, expressed at lower level in several organs and cell lines.

It is found in the cytoplasm. Its subcellular location is the nucleus. The protein resides in the nucleolus. Retroviral replication requires the nuclear export and translation of unspliced, singly-spliced and multiply-spliced derivatives of the initial genomic transcript. Rec interacts with a highly structured RNA element (RcRE) present in the viral 3'LTR and recruits the cellular nuclear export machinery. This permits export to the cytoplasm of unspliced genomic or incompletely spliced subgenomic viral transcripts. This Homo sapiens (Human) protein is Endogenous retrovirus group K member 6 Rec protein (ERVK-6).